Here is a 752-residue protein sequence, read N- to C-terminus: Peptidyl-prolyl cis-trans isomerase G (752 aa).

A PPIase cyclophilin-type domain is found at 11–176; sequence FFDIAINNQP…AEVRILSCGE (166 aa). Positions 182–193 are enriched in basic residues; that stretch reads KVKKEEKKRHKS. The disordered stretch occupies residues 182–752; sequence KVKKEEKKRH…SPGTDEDKSG (571 aa). The segment covering 194–214 has biased composition (low complexity); the sequence is SSSSSSSDSDSSSDSQSSSES. Positions 226-251 are enriched in basic residues; that stretch reads RKRKKKHRKNSRKHKKEKKKRKKSKK. Residues S252, S254, S255, S257, and S288 each carry the phosphoserine modification. Basic and acidic residues predominate over residues 290–308; the sequence is PKADDKERKNREREREREC. S313 carries the post-translational modification Phosphoserine. A compositionally biased stretch (basic residues) spans 327–345; sequence SGRKIKGRGPRRYRTPSRS. Basic and acidic residues-rich tracts occupy residues 346-366 and 377-447; these read RSRD…EMQR and RWIK…DKYN. At S354 the chain carries Phosphoserine. A Phosphothreonine modification is found at T356. S384 is modified (phosphoserine). K390 is covalently cross-linked (Glycyl lysine isopeptide (Lys-Gly) (interchain with G-Cter in SUMO2)). 3 positions are modified to phosphoserine: S395, S411, and S413. Residues 448–461 are compositionally biased toward basic residues; sequence KNKVKKRGKSKSRS. Composition is skewed to basic and acidic residues over residues 462–552 and 577–598; these read KSKE…DLTK and RSHD…QEYR. Over residues 599-625 the composition is skewed to basic residues; sequence RRGRSRSRDRRTPGRSRSKDRRRRRRD. A compositionally biased stretch (basic and acidic residues) spans 626 to 684; sequence SRSSEREESQSRNKDKYRSQESKSSHRKENSEGEKRTYSKSRDHNSSSNNREKKADREQ. A phosphoserine mark is found at S685 and S688. Positions 685 to 705 are enriched in polar residues; sequence SPVSKTKQSSQDNEVKSSTLK. A Glycyl lysine isopeptide (Lys-Gly) (interchain with G-Cter in SUMO2) cross-link involves residue K691. S694, S742, and S743 each carry phosphoserine. Positions 706–752 are enriched in basic and acidic residues; it reads NQEDEKTRSPVEKENQKSKGQENDHVHDKNKKCDHESSPGTDEDKSG. Phosphothreonine is present on T746. S751 is subject to Phosphoserine.

Interacts with CLK1, PNN and with the phosphorylated C-terminal domain of RNA polymerase II.

Its subcellular location is the nucleus matrix. The protein localises to the nucleus speckle. The catalysed reaction is [protein]-peptidylproline (omega=180) = [protein]-peptidylproline (omega=0). With respect to regulation, inhibited by cyclosporin A (CsA). Functionally, PPIase that catalyzes the cis-trans isomerization of proline imidic peptide bonds in oligopeptides and may therefore assist protein folding. May be implicated in the folding, transport, and assembly of proteins. May play an important role in the regulation of pre-mRNA splicing. This is Peptidyl-prolyl cis-trans isomerase G (Ppig) from Mus musculus (Mouse).